Consider the following 685-residue polypeptide: Stromal interaction molecule 1 (685 aa).

The signal sequence occupies residues Met-1–Ser-22. The Extracellular segment spans residues Leu-23–Asp-213. Residues Ser-24 to Ser-43 form a disordered region. A compositionally biased stretch (low complexity) spans Thr-32–Glu-41. 2 EF-hand domains span residues Ser-64 to Asn-97 and Thr-102 to Ala-126. The Ca(2+) site is built by Asp-76, Asp-78, Asn-80, Asp-82, and Glu-87. Asn-131 and Asn-171 each carry an N-linked (GlcNAc...) asparagine glycan. Residues Trp-132 to Phe-200 form the SAM domain. Residues Phe-214–Asn-234 form a helical membrane-spanning segment. Over Arg-235 to Lys-685 the chain is Cytoplasmic. Residues Leu-248–Val-442 adopt a coiled-coil conformation. Ser-257 carries the post-translational modification Phosphoserine. The SOAR/CAD stretch occupies residues Pro-344 to Val-442. The interval Asp-475–Glu-483 is contributes to fast Ca(2+)-dependent inactivation of CRAC channels. Low complexity predominate over residues Met-490–Val-499. Residues Met-490–Arg-542 form a disordered region. Phosphothreonine is present on Thr-504. Ser-512 carries the phosphoserine modification. Over residues Asp-515 to Arg-532 the composition is skewed to basic and acidic residues. Thr-517 carries the post-translational modification Phosphothreonine. Phosphoserine occurs at positions 519, 521, 523, 524, 567, 575, 602, 608, 618, 621, and 628. The segment at Leu-596–Lys-685 is disordered. Residues Ser-608 to Ser-620 show a composition bias toward low complexity. Residues Thr-642 to Pro-645 carry the Microtubule tip localization signal motif. Acidic residues predominate over residues Glu-655–Asp-666. A Phosphoserine modification is found at Ser-660. Thr-665 carries the post-translational modification Phosphothreonine. Ser-668 is subject to Phosphoserine. A compositionally biased stretch (basic residues) spans Gly-670 to Lys-685. The interval Lys-672–Lys-685 is required for generation of inwardly rectifying CRAC currents.

As to quaternary structure, monomer in the presence of Ca(2+). It oligomerizes in absence of Ca(2+). Forms homooligomers and heterooligomers with STIM2. Interacts with pore-forming subunits of CRAC channels, ORAI1, ORAI2 and ORAI3; this interaction is potentiated upon Ca(2+) store depletion. Interacts (via the transmembrane region and the SOAR/CAD domain) with SPPL3; the interaction promotes the binding of STIM1 to ORAI1. Interacts with ORAI1. Interacts with MAPRE1; probably required for targeting to the growing microtubule plus ends. Interacts with CRACR2A/EFCAB4B; the interaction is direct and takes place in absence of Ca(2+). Forms a complex with CRACR2A/EFCAB4B and ORAI1 at low concentration of Ca(2+), the complex dissociates at elevated Ca(2+) concentrations. Interacts with SARAF, promoting a slow inactivation of STIM1-dependent SOCE activity, possibly by facilitating the deoligomerization of STIM1. Interacts with EFHB; the interaction takes place upon Ca(2+)-store depletion and inhibits the association with SARAF. Interacts with ASPH. Interacts with SLC35G1; intracellular Ca(2+)-dependent. May interact with ATP1A1, ATP2A2, ATP2B1, ATP2B4, KPNB1 and XPO1; through SLC35G1. Interacts with TMEM203. Interacts with STIMATE, promoting STIM1 conformational switch. Interacts with TMEM178A. Interacts with CASQ1 (via C-terminal end and preferentially with the monomeric form); this interaction increases in response to a depletion of intracellular Ca(2+), decreases both STIM1 aggregation and clustering, interaction of STIM1 with ORAI1 and store-operated Ca(2+) entry (SOCE) activity. Interacts with ADCY8. In terms of processing, glycosylation is required for cell surface expression. Post-translationally, phosphorylated predominantly on Ser residues.

The protein resides in the cell membrane. Its subcellular location is the endoplasmic reticulum membrane. It is found in the sarcoplasmic reticulum. It localises to the cytoplasm. The protein localises to the cytoskeleton. Functionally, acts as a Ca(2+) sensor that gates two major inward rectifying Ca(2+) channels at the plasma membrane: Ca(2+) release-activated Ca(2+) (CRAC) channels and arachidonate-regulated Ca(2+)-selective (ARC) channels. Plays a role in mediating store-operated Ca(2+) entry (SOCE), a Ca(2+) influx following depletion of intracellular Ca(2+) stores. Upon Ca(2+) depletion, translocates from the endoplasmic reticulum to the plasma membrane where it activates CRAC channel pore-forming subunits ORA1, ORA2 and ORAI3 to generate sustained and oscillatory Ca(2+) entry. Involved in enamel formation. The protein is Stromal interaction molecule 1 of Rattus norvegicus (Rat).